Consider the following 366-residue polypeptide: Capsular polysaccharide phosphotransferase LcbA (366 aa).

Belongs to the stealth family.

The protein is Capsular polysaccharide phosphotransferase LcbA (lcbA) of Neisseria meningitidis.